A 293-amino-acid chain; its full sequence is uncharacterized protein (293 aa).

Residues 1 to 10 (MHMQLRKRKR) are compositionally biased toward basic residues. Positions 1 to 28 (MHMQLRKRKRVDYSGRNQTSDPPSTTTA) are disordered. Residues 15–28 (GRNQTSDPPSTTTA) show a composition bias toward polar residues.

The protein localises to the nucleus. This is an uncharacterized protein from Saccharomyces cerevisiae (strain ATCC 204508 / S288c) (Baker's yeast).